A 201-amino-acid chain; its full sequence is Holliday junction branch migration complex subunit RuvA (201 aa).

Positions 1–64 are domain I; it reads MIGRLHGKII…EDAHLLFGFA (64 aa). The segment at 65–143 is domain II; that stretch reads QKQDRTLFRE…GVAQSDFFEE (79 aa). A flexible linker region spans residues 144 to 154; the sequence is HSVETIVATHS. Positions 154–201 are domain III; that stretch reads SHDPADEARDALVALGYKLADAEKMIKKVNKAGATSEQLIREALKASL.

This sequence belongs to the RuvA family. Homotetramer. Forms an RuvA(8)-RuvB(12)-Holliday junction (HJ) complex. HJ DNA is sandwiched between 2 RuvA tetramers; dsDNA enters through RuvA and exits via RuvB. An RuvB hexamer assembles on each DNA strand where it exits the tetramer. Each RuvB hexamer is contacted by two RuvA subunits (via domain III) on 2 adjacent RuvB subunits; this complex drives branch migration. In the full resolvosome a probable DNA-RuvA(4)-RuvB(12)-RuvC(2) complex forms which resolves the HJ.

The protein resides in the cytoplasm. The RuvA-RuvB-RuvC complex processes Holliday junction (HJ) DNA during genetic recombination and DNA repair, while the RuvA-RuvB complex plays an important role in the rescue of blocked DNA replication forks via replication fork reversal (RFR). RuvA specifically binds to HJ cruciform DNA, conferring on it an open structure. The RuvB hexamer acts as an ATP-dependent pump, pulling dsDNA into and through the RuvAB complex. HJ branch migration allows RuvC to scan DNA until it finds its consensus sequence, where it cleaves and resolves the cruciform DNA. This Actinobacillus pleuropneumoniae serotype 5b (strain L20) protein is Holliday junction branch migration complex subunit RuvA.